We begin with the raw amino-acid sequence, 259 residues long: O-antigen export system permease protein RfbA (259 aa).

6 helical membrane-spanning segments follow: residues 33–53 (FGYLWSIANPLLFAMIYYFIF), 73–95 (FPWQWFASSATNSLFSFIANAQI), 111–131 (VMMEGLHFLCTIPVIIAFLFV), 142–162 (WGIPIIAIGQVIFTFGISIIF), 176–196 (VSLGIMLMFYCTPILYASDMI), and 228–248 (EYISILYITGFILTIVGLAIF). The region spanning 33–251 (FGYLWSIANP…IVGLAIFNKL (219 aa)) is the ABC transmembrane type-2 domain.

The protein belongs to the ABC-2 integral membrane protein family.

The protein resides in the cell inner membrane. Its function is as follows. May form an ATP-driven O-antigen export apparatus, in association with RfbB. In Klebsiella pneumoniae, this protein is O-antigen export system permease protein RfbA (rfbA).